Here is a 126-residue protein sequence, read N- to C-terminus: Urease subunit beta (126 aa).

The protein belongs to the urease beta subunit family. As to quaternary structure, heterotrimer of UreA (gamma), UreB (beta) and UreC (alpha) subunits. Three heterotrimers associate to form the active enzyme.

It localises to the cytoplasm. It carries out the reaction urea + 2 H2O + H(+) = hydrogencarbonate + 2 NH4(+). It functions in the pathway nitrogen metabolism; urea degradation; CO(2) and NH(3) from urea (urease route): step 1/1. The sequence is that of Urease subunit beta from Gloeothece citriformis (strain PCC 7424) (Cyanothece sp. (strain PCC 7424)).